Here is a 758-residue protein sequence, read N- to C-terminus: GPI ethanolamine phosphate transferase 2 (758 aa).

Asn28, Asn77, and Asn178 each carry an N-linked (GlcNAc...) asparagine glycan. 3 consecutive transmembrane segments (helical) span residues 405–425 (LVAI…FRNL), 431–451 (LLAF…SSFI), and 455–472 (HVIW…QLLN). Asn493 is a glycosylation site (N-linked (GlcNAc...) asparagine). Transmembrane regions (helical) follow at residues 533–553 (PSPI…MPII), 561–581 (PIIA…LLLI), 598–618 (LFIL…YDIW), 667–687 (IFAV…WWCL), 698–718 (VKTF…SCFI), and 733–753 (LLYN…ISTI).

Belongs to the PIGG/PIGN/PIGO family. PIGG subfamily.

It is found in the endoplasmic reticulum membrane. Its pathway is glycolipid biosynthesis; glycosylphosphatidylinositol-anchor biosynthesis. Ethanolamine phosphate transferase involved in glycosylphosphatidylinositol-anchor biosynthesis. Transfers ethanolamine phosphate to the GPI second mannose. The sequence is that of GPI ethanolamine phosphate transferase 2 (las21) from Schizosaccharomyces pombe (strain 972 / ATCC 24843) (Fission yeast).